We begin with the raw amino-acid sequence, 867 residues long: Elongation factor 2 (867 aa).

In terms of domain architecture, tr-type G spans 17–368 (HNIRNLSVVA…MIVLHLPSPV (352 aa)). 26-33 (AHVDHGKS) lines the GTP pocket. Thr57 and Thr59 each carry phosphothreonine. GTP is bound by residues 176 to 179 (NKLD) and 231 to 233 (SGL). His723 carries the diphthamide modification.

The protein belongs to the TRAFAC class translation factor GTPase superfamily. Classic translation factor GTPase family. EF-G/EF-2 subfamily. In terms of processing, phosphorylation by EF-2 kinase completely inactivates EF-2.

It is found in the cytoplasm. It catalyses the reaction GTP + H2O = GDP + phosphate + H(+). Catalyzes the GTP-dependent ribosomal translocation step during translation elongation. During this step, the ribosome changes from the pre-translocational (PRE) to the post-translocational (POST) state as the newly formed A-site-bound peptidyl-tRNA and P-site-bound deacylated tRNA move to the P and E sites, respectively. Catalyzes the coordinated movement of the two tRNA molecules, the mRNA and conformational changes in the ribosome. This chain is Elongation factor 2, found in Blastocystis hominis.